Reading from the N-terminus, the 431-residue chain is Serine hydroxymethyltransferase 2 (431 aa).

(6S)-5,6,7,8-tetrahydrofolate is bound by residues Leu131 and 135-137 (GHL). At Lys240 the chain carries N6-(pyridoxal phosphate)lysine. Glu256 contributes to the (6S)-5,6,7,8-tetrahydrofolate binding site.

This sequence belongs to the SHMT family. In terms of assembly, homodimer. The cofactor is pyridoxal 5'-phosphate.

It is found in the cytoplasm. It carries out the reaction (6R)-5,10-methylene-5,6,7,8-tetrahydrofolate + glycine + H2O = (6S)-5,6,7,8-tetrahydrofolate + L-serine. The protein operates within one-carbon metabolism; tetrahydrofolate interconversion. Its pathway is amino-acid biosynthesis; glycine biosynthesis; glycine from L-serine: step 1/1. Its function is as follows. Catalyzes the reversible interconversion of serine and glycine with tetrahydrofolate (THF) serving as the one-carbon carrier. This reaction serves as the major source of one-carbon groups required for the biosynthesis of purines, thymidylate, methionine, and other important biomolecules. Also exhibits THF-independent aldolase activity toward beta-hydroxyamino acids, producing glycine and aldehydes, via a retro-aldol mechanism. This is Serine hydroxymethyltransferase 2 from Vibrio vulnificus (strain CMCP6).